The primary structure comprises 142 residues: Hemoglobin subunit alpha (142 aa).

The Globin domain occupies valine 2–arginine 142. Residue serine 4 is modified to Phosphoserine. Lysine 8 is modified (N6-succinyllysine). Threonine 9 bears the Phosphothreonine mark. Lysine 12 carries the post-translational modification N6-succinyllysine. An N6-acetyllysine; alternate modification is found at lysine 17. Residue lysine 17 is modified to N6-succinyllysine; alternate. Tyrosine 25 is subject to Phosphotyrosine. A Phosphoserine modification is found at serine 36. Lysine 41 is subject to N6-succinyllysine. Serine 50 carries the phosphoserine modification. An O2-binding site is contributed by histidine 59. Histidine 88 serves as a coordination point for heme b. Position 103 is a phosphoserine (serine 103). Position 109 is a phosphothreonine (threonine 109). Serine 125 and serine 132 each carry phosphoserine. 2 positions are modified to phosphothreonine: threonine 135 and threonine 138. At serine 139 the chain carries Phosphoserine.

This sequence belongs to the globin family. In terms of assembly, heterotetramer of two alpha chains and two beta chains. As to expression, red blood cells.

Involved in oxygen transport from the lung to the various peripheral tissues. In terms of biological role, hemopressin acts as an antagonist peptide of the cannabinoid receptor CNR1. Hemopressin-binding efficiently blocks cannabinoid receptor CNR1 and subsequent signaling. In Sapajus apella (Brown-capped capuchin), this protein is Hemoglobin subunit alpha (HBA).